Reading from the N-terminus, the 201-residue chain is Recombination protein RecR (201 aa).

The C4-type zinc finger occupies 60-75 (CSCCGNVDTIDPCTVC). In terms of domain architecture, Toprim spans 83-178 (SVIIVVEDVA…KITRLAHGVP (96 aa)).

It belongs to the RecR family.

May play a role in DNA repair. It seems to be involved in an RecBC-independent recombinational process of DNA repair. It may act with RecF and RecO. This chain is Recombination protein RecR, found in Sinorhizobium fredii (strain NBRC 101917 / NGR234).